A 260-amino-acid chain; its full sequence is 3'-5' ssDNA/RNA exonuclease TatD (260 aa).

Residues glutamate 92, histidine 128, and histidine 153 each contribute to the a divalent metal cation site.

It belongs to the metallo-dependent hydrolases superfamily. TatD-type hydrolase family. TatD subfamily. As to quaternary structure, monomer. Mg(2+) serves as cofactor.

Its subcellular location is the cytoplasm. 3'-5' exonuclease that prefers single-stranded DNA and RNA. May play a role in the H(2)O(2)-induced DNA damage repair. In Pectobacterium atrosepticum (strain SCRI 1043 / ATCC BAA-672) (Erwinia carotovora subsp. atroseptica), this protein is 3'-5' ssDNA/RNA exonuclease TatD.